The primary structure comprises 434 residues: Serine--tRNA ligase (434 aa).

Residue 239–241 participates in L-serine binding; that stretch reads TAE. 270–272 contacts ATP; the sequence is RSE. Glu293 is an L-serine binding site. An ATP-binding site is contributed by 357 to 360; it reads EISS. Ser393 lines the L-serine pocket.

Belongs to the class-II aminoacyl-tRNA synthetase family. Type-1 seryl-tRNA synthetase subfamily. As to quaternary structure, homodimer. The tRNA molecule binds across the dimer.

It is found in the cytoplasm. It catalyses the reaction tRNA(Ser) + L-serine + ATP = L-seryl-tRNA(Ser) + AMP + diphosphate + H(+). It carries out the reaction tRNA(Sec) + L-serine + ATP = L-seryl-tRNA(Sec) + AMP + diphosphate + H(+). It participates in aminoacyl-tRNA biosynthesis; selenocysteinyl-tRNA(Sec) biosynthesis; L-seryl-tRNA(Sec) from L-serine and tRNA(Sec): step 1/1. Its function is as follows. Catalyzes the attachment of serine to tRNA(Ser). Is also able to aminoacylate tRNA(Sec) with serine, to form the misacylated tRNA L-seryl-tRNA(Sec), which will be further converted into selenocysteinyl-tRNA(Sec). The chain is Serine--tRNA ligase from Pseudoalteromonas translucida (strain TAC 125).